The chain runs to 134 residues: Large ribosomal subunit protein uL16c (134 aa).

The disordered stretch occupies residues 1–21 (MLSPKRTKYRKHHRGRMRGKA).

The protein belongs to the universal ribosomal protein uL16 family. Part of the 50S ribosomal subunit.

It localises to the plastid. It is found in the chloroplast. The protein is Large ribosomal subunit protein uL16c of Chlorella vulgaris (Green alga).